The primary structure comprises 396 residues: S-adenosylmethionine synthase (396 aa).

Position 15 (His15) interacts with ATP. Position 17 (Asp17) interacts with Mg(2+). Residue Glu43 coordinates K(+). Residues Glu56 and Gln99 each contribute to the L-methionine site. Residues 99–109 (QSPDIALGVNR) form a flexible loop region. Residues 175–177 (DGK), 241–242 (RF), Asp250, 256–257 (RK), Ala273, and Lys277 each bind ATP. Position 250 (Asp250) interacts with L-methionine. Lys281 is a binding site for L-methionine.

This sequence belongs to the AdoMet synthase family. As to quaternary structure, homotetramer; dimer of dimers. It depends on Mg(2+) as a cofactor. Requires K(+) as cofactor.

It is found in the cytoplasm. It carries out the reaction L-methionine + ATP + H2O = S-adenosyl-L-methionine + phosphate + diphosphate. It functions in the pathway amino-acid biosynthesis; S-adenosyl-L-methionine biosynthesis; S-adenosyl-L-methionine from L-methionine: step 1/1. Functionally, catalyzes the formation of S-adenosylmethionine (AdoMet) from methionine and ATP. The overall synthetic reaction is composed of two sequential steps, AdoMet formation and the subsequent tripolyphosphate hydrolysis which occurs prior to release of AdoMet from the enzyme. The polypeptide is S-adenosylmethionine synthase (Carboxydothermus hydrogenoformans (strain ATCC BAA-161 / DSM 6008 / Z-2901)).